A 593-amino-acid chain; its full sequence is ATP-dependent lipid A-core flippase (593 aa).

The next 6 helical transmembrane spans lie at 33–53, 75–95, 137–157, 164–184, 262–282, and 292–312; these read IGIV…EAGI, WYVP…QYTS, AIVF…VTLV, IFLL…VAVI, QPLT…IAVV, and GGFV…KHLI. One can recognise an ABC transmembrane type-1 domain in the interval 37–320; that stretch reads VLAVVTMGVV…LIDVNQPLQR (284 aa). The 235-residue stretch at 352 to 586 folds into the ABC transporter domain; the sequence is IEFRAVSFDY…GGLYAHLHRI (235 aa). 386 to 393 lines the ATP pocket; sequence GPSGSGKT.

Belongs to the ABC transporter superfamily. Lipid exporter (TC 3.A.1.106) family. In terms of assembly, homodimer.

Its subcellular location is the cell inner membrane. The catalysed reaction is ATP + H2O + lipid A-core oligosaccharideSide 1 = ADP + phosphate + lipid A-core oligosaccharideSide 2.. Its function is as follows. Involved in lipopolysaccharide (LPS) biosynthesis. Translocates lipid A-core from the inner to the outer leaflet of the inner membrane. Transmembrane domains (TMD) form a pore in the inner membrane and the ATP-binding domain (NBD) is responsible for energy generation. This Burkholderia orbicola (strain AU 1054) protein is ATP-dependent lipid A-core flippase.